The chain runs to 55 residues: Large ribosomal subunit protein bL33A (55 aa).

It belongs to the bacterial ribosomal protein bL33 family.

The chain is Large ribosomal subunit protein bL33A from Mycolicibacterium vanbaalenii (strain DSM 7251 / JCM 13017 / BCRC 16820 / KCTC 9966 / NRRL B-24157 / PYR-1) (Mycobacterium vanbaalenii).